The primary structure comprises 116 residues: Iron-sulfur cluster insertion protein ErpA (116 aa).

Residues Cys-44, Cys-108, and Cys-110 each coordinate iron-sulfur cluster.

Belongs to the HesB/IscA family. As to quaternary structure, homodimer. Iron-sulfur cluster is required as a cofactor.

Its function is as follows. Required for insertion of 4Fe-4S clusters for at least IspG. In Shewanella denitrificans (strain OS217 / ATCC BAA-1090 / DSM 15013), this protein is Iron-sulfur cluster insertion protein ErpA.